A 526-amino-acid chain; its full sequence is Acid-sensing ion channel 1 (526 aa).

At Met1 to Cys49 the chain is on the cytoplasmic side. The helical transmembrane segment at Phe50–Gln66 threads the bilayer. Over Tyr67–Glu425 the chain is Extracellular. 7 cysteine pairs are disulfide-bonded: Cys93–Cys194, Cys172–Cys179, Cys290–Cys365, Cys308–Cys361, Cys312–Cys359, Cys321–Cys343, and Cys323–Cys335. N-linked (GlcNAc...) asparagine glycans are attached at residues Asn366 and Asn393. The chain crosses the membrane as a discontinuously helical span at residues Ile426 to Tyr456. A GAS motif; ion selectivity filter motif is present at residues Gly442 to Ser444. Over Glu457 to Cys526 the chain is Cytoplasmic. Ser477 is subject to Phosphoserine; by PKA. Position 497 is a phosphoserine (Ser497).

It belongs to the amiloride-sensitive sodium channel (TC 1.A.6) family. ASIC1 subfamily. Homotrimer. Heterotrimer; with other ASIC proteins producing channel with different properties. Interacts with PICK1; regulates ASIC1 clustering in membranes. Interacts with STOM; alters heterotrimeric ASIC channels activity. In terms of processing, pH-gating could be regulated by serine proteases. Post-translationally, phosphorylation by PKA regulates interaction with PICK1 and subcellular localization. Phosphorylation by PKC may regulate the channel. Expressed in brain areas receiving strong excitatory corticofugal input. In hippocampus, expressed in the hilus of the dentate gyrus. In the cerebral cortex expressed in anterior and posterior cingulate cortex, sensory and motor cortices. In the sensory cortex strongest expression is detected in the whisker barrel field. In sensorimotor and cingulate cortex expression is elevated in layer III. Also expressed in basal ganglia, striatum, ventral pallidum, olfactory tubercle, and nucleus accumbens. Weakly expressed in thalamus with the exception of the habenula and the medial septal nuclei. In olfactory bulb, preferentially expressed in the glomerular layer, within glomeruli. Expressed in cerebellum in the molecular and granule cell layers. Strongly expressed in amygdala complex, particularly in the lateral and basolateral nuclei. Isoform 1 is more abundant in brain compared to isoform 2 (at protein level). Expressed in the nodose ganglion and dorsal root ganglion. Expressed in dendritic spine cells.

The protein resides in the cell membrane. Its subcellular location is the postsynaptic cell membrane. It localises to the cell projection. The protein localises to the dendrite. It carries out the reaction Na(+)(in) = Na(+)(out). The catalysed reaction is Ca(2+)(in) = Ca(2+)(out). It catalyses the reaction K(+)(in) = K(+)(out). The enzyme catalyses Li(+)(in) = Li(+)(out). Its activity is regulated as follows. Inhibited by the diuretic drug amiloride. With respect to regulation, the activity of the channel is sensitive to rapid decrease in osmotic pressure. In terms of biological role, forms voltage-independent, pH-gated trimeric sodium channels that act as postsynaptic excitatory receptors in the nervous system, playing a crucial role in regulating synaptic plasticity, learning, and memory. Upon extracellular pH drop this channel elicits transient, fast activating, and completely desensitizing inward currents. Displays high selectivity for sodium ions but can also permit the permeation of other cations. Regulates more or less directly intracellular calcium concentration and CaMKII phosphorylation, and thereby the density of dendritic spines. Modulates neuronal activity in the circuits underlying innate fear. Functionally, has high selectivity for sodium ions but is also potentially permeable to other cations including potassium. Could function in cochlear mechanoelectrical transduction. The chain is Acid-sensing ion channel 1 from Mus musculus (Mouse).